Consider the following 221-residue polypeptide: Vesicle-associated membrane protein 722 (221 aa).

The Cytoplasmic segment spans residues 1 to 196 (MAQQSLIYSF…MWFQNMKIKL (196 aa)). A Longin domain is found at 10 to 114 (FVARGTVILV…SLNKEFGSKL (105 aa)). A v-SNARE coiled-coil homology domain is found at 130 to 190 (KLAKVKAQVS…TQMRRKMWFQ (61 aa)). Residues 197-217 (IVLAIIIALILIIILSICGGF) form a helical; Anchor for type IV membrane protein membrane-spanning segment. Over 218–221 (NCGK) the chain is Vesicular.

It belongs to the synaptobrevin family. As to expression, highly expressed in stems and roots. Detected in flowers and leaves.

It is found in the cell membrane. It localises to the early endosome membrane. Functionally, involved in the targeting and/or fusion of transport vesicles to their target membrane. The chain is Vesicle-associated membrane protein 722 from Arabidopsis thaliana (Mouse-ear cress).